Consider the following 410-residue polypeptide: Lissencephaly-1 homolog A (410 aa).

One can recognise a LisH domain in the interval 7–39; it reads QRDELNRAIADYLRSNGYEEAYSVFKKEAELDM. Residues 56–83 adopt a coiled-coil conformation; the sequence is TSVIRLQKKVMELESKLNEAKEEINIGG. WD repeat units lie at residues 106-145, 148-187, 190-229, 232-271, 274-333, 336-375, and 378-410; these read GHRS…FERT, GHTD…CIRT, GHDH…CVKT, GHRE…CKAE, EHEH…CLMT, GHDN…CTKT, and AHEH…WECR.

This sequence belongs to the WD repeat LIS1/nudF family. Can self-associate. Component of the cytosolic PAF-AH (I) heterotetrameric enzyme, which is composed of PAFAH1B1 (beta), PAFAH1B2 (alpha2) and PAFAH1B3 (alpha1) subunits. The catalytic activity of the enzyme resides in the alpha1 (PAFAH1B3) and alpha2 (PAFAH1B2) subunits, whereas the beta subunit (PAFAH1B1) has regulatory activity. Trimer formation is not essential for the catalytic activity. Interacts with dynein, dynactin, nde1 and ndel1.

The protein resides in the cytoplasm. It localises to the cytoskeleton. It is found in the microtubule organizing center. The protein localises to the centrosome. Its function is as follows. Regulatory subunit (beta subunit) of the cytosolic type I platelet-activating factor (PAF) acetylhydrolase (PAF-AH (I)), an enzyme that catalyzes the hydrolyze of the acetyl group at the sn-2 position of PAF and its analogs and participates in PAF inactivation. Regulates the PAF-AH (I) activity in a catalytic dimer composition-dependent manner. Positively regulates the activity of the minus-end directed microtubule motor protein dynein. May enhance dynein-mediated microtubule sliding by targeting dynein to the microtubule plus end. Required for several dynein- and microtubule-dependent processes such as the maintenance of Golgi integrity, the peripheral transport of microtubule fragments and the coupling of the nucleus and centrosome. May be required for proliferation of neuronal precursors and neuronal migration. This Danio rerio (Zebrafish) protein is Lissencephaly-1 homolog A (pafah1b1a).